Consider the following 330-residue polypeptide: Ferredoxin--NADP reductase (330 aa).

Residues glutamate 35, glutamine 43, tyrosine 48, valine 90, phenylalanine 123, aspartate 285, and threonine 326 each contribute to the FAD site.

It belongs to the ferredoxin--NADP reductase type 2 family. In terms of assembly, homodimer. FAD serves as cofactor.

It carries out the reaction 2 reduced [2Fe-2S]-[ferredoxin] + NADP(+) + H(+) = 2 oxidized [2Fe-2S]-[ferredoxin] + NADPH. The chain is Ferredoxin--NADP reductase from Streptococcus pyogenes serotype M3 (strain ATCC BAA-595 / MGAS315).